A 257-amino-acid polypeptide reads, in one-letter code: Enterotoxin type A (257 aa).

An N-terminal signal peptide occupies residues 1–24; the sequence is MKKTAFTLLLFIALTLTTSPLVNG. A disulfide bond links C120 and C130. Residues H211, H249, and D251 each contribute to the Zn(2+) site.

The protein belongs to the staphylococcal/streptococcal toxin family. In terms of assembly, monomer. Interacts with MHC class II molecules alpha/HLA-DRB1 and beta/HLA-DRA chains. The interaction with MHC-II molecules occurs at both zinc-dependent and zinc-independent sites. Interacts with T-cell receptor beta variable 7-9/TRBV7-9. Requires Zn(2+) as cofactor.

It localises to the secreted. Its function is as follows. Staphylococcal enterotoxin that activates the host immune system by binding as unprocessed molecules to major histocompatibility (MHC) complex class II and T-cell receptor (TCR) molecules. In turn, waves of cellular activation, cytokine production, and migration into the lung tissue and airways occur via alphabeta T-cells. Also causes the intoxication staphylococcal food poisoning syndrome. The illness is characterized by high fever, hypotension, diarrhea, shock, and in some cases death. The chain is Enterotoxin type A (entA) from Staphylococcus aureus.